A 716-amino-acid polypeptide reads, in one-letter code: Fatty acid oxidation complex subunit alpha (716 aa).

The tract at residues 1–189 (MIYQSPTIQV…KVGAVDAVVA (189 aa)) is enoyl-CoA hydratase/isomerase. Asp296 provides a ligand contact to substrate. Residues 311-716 (KDVKSAAVLG…AANNGSYYQA (406 aa)) are 3-hydroxyacyl-CoA dehydrogenase. Residues Met324, Asp343, 400–402 (VVE), Lys407, and Ser429 each bind NAD(+). The active-site For 3-hydroxyacyl-CoA dehydrogenase activity is the His450. NAD(+) is bound at residue Asn453. Positions 500 and 660 each coordinate substrate.

The protein in the N-terminal section; belongs to the enoyl-CoA hydratase/isomerase family. In the C-terminal section; belongs to the 3-hydroxyacyl-CoA dehydrogenase family. Heterotetramer of two alpha chains (FadB) and two beta chains (FadA).

The catalysed reaction is a (3S)-3-hydroxyacyl-CoA + NAD(+) = a 3-oxoacyl-CoA + NADH + H(+). It catalyses the reaction a (3S)-3-hydroxyacyl-CoA = a (2E)-enoyl-CoA + H2O. The enzyme catalyses a 4-saturated-(3S)-3-hydroxyacyl-CoA = a (3E)-enoyl-CoA + H2O. It carries out the reaction (3S)-3-hydroxybutanoyl-CoA = (3R)-3-hydroxybutanoyl-CoA. The catalysed reaction is a (3Z)-enoyl-CoA = a 4-saturated (2E)-enoyl-CoA. It catalyses the reaction a (3E)-enoyl-CoA = a 4-saturated (2E)-enoyl-CoA. Its pathway is lipid metabolism; fatty acid beta-oxidation. Its function is as follows. Involved in the aerobic and anaerobic degradation of long-chain fatty acids via beta-oxidation cycle. Catalyzes the formation of 3-oxoacyl-CoA from enoyl-CoA via L-3-hydroxyacyl-CoA. It can also use D-3-hydroxyacyl-CoA and cis-3-enoyl-CoA as substrate. This Shewanella sp. (strain ANA-3) protein is Fatty acid oxidation complex subunit alpha.